A 109-amino-acid polypeptide reads, in one-letter code: MTATTTTAAGGGKVQPRGLPVALSLLLLLVLAAGLGGGAEAQQTCAGQLRGLAPCLRYSVPPLPGQVPPAPGPECCSALGAVSRDCACGTFSIINSLPAKCALPPVSCQ.

The N-terminal stretch at Met1–Ala41 is a signal peptide. 4 disulfide bridges follow: Cys45/Cys86, Cys55/Cys75, Cys76/Cys101, and Cys88/Cys108.

It belongs to the A9/FIL1 family. Tapetum of anthers.

The protein localises to the secreted. This Zea mays (Maize) protein is Anther-specific protein MZm3-3.